The primary structure comprises 265 residues: tRNA (guanine-N(7)-)-methyltransferase (265 aa).

The S-adenosyl-L-methionine site is built by Glu96, Glu121, Asp148, and Asp170. Asp170 is an active-site residue. Residues Lys174 and Asp206 each contribute to the substrate site.

It belongs to the class I-like SAM-binding methyltransferase superfamily. TrmB family.

It carries out the reaction guanosine(46) in tRNA + S-adenosyl-L-methionine = N(7)-methylguanosine(46) in tRNA + S-adenosyl-L-homocysteine. The protein operates within tRNA modification; N(7)-methylguanine-tRNA biosynthesis. Catalyzes the formation of N(7)-methylguanine at position 46 (m7G46) in tRNA. The sequence is that of tRNA (guanine-N(7)-)-methyltransferase from Rhodopseudomonas palustris (strain ATCC BAA-98 / CGA009).